The chain runs to 178 residues: NADH-quinone oxidoreductase subunit B (178 aa).

[4Fe-4S] cluster is bound by residues Cys-45, Cys-46, Cys-111, and Cys-140.

This sequence belongs to the complex I 20 kDa subunit family. NDH-1 is composed of 15 different subunits. Subunits NuoB, C, D, E, F, and G constitute the peripheral sector of the complex. Requires [4Fe-4S] cluster as cofactor.

The protein localises to the cell membrane. The enzyme catalyses a quinone + NADH + 5 H(+)(in) = a quinol + NAD(+) + 4 H(+)(out). In terms of biological role, NDH-1 shuttles electrons from NADH, via FMN and iron-sulfur (Fe-S) centers, to quinones in the respiratory chain. The immediate electron acceptor for the enzyme in this species is believed to be a menaquinone. Couples the redox reaction to proton translocation (for every two electrons transferred, four hydrogen ions are translocated across the cytoplasmic membrane), and thus conserves the redox energy in a proton gradient. The sequence is that of NADH-quinone oxidoreductase subunit B from Deinococcus deserti (strain DSM 17065 / CIP 109153 / LMG 22923 / VCD115).